Reading from the N-terminus, the 20-residue chain is Basic phospholipase A2 cannitoxin alpha chain (20 aa).

Heterotrimer of alpha, beta, and gamma chains; non-covalently linked. Requires Ca(2+) as cofactor. In terms of tissue distribution, expressed by the venom gland.

Its subcellular location is the secreted. The enzyme catalyses a 1,2-diacyl-sn-glycero-3-phosphocholine + H2O = a 1-acyl-sn-glycero-3-phosphocholine + a fatty acid + H(+). Its function is as follows. Heterotrimer: Snake venom phospholipase A2 (PLA2) heterotrimer that acts as a potent presynaptic neurotoxin by blocking synaptic transmission and synaptic vesicle recycling. Enzymatic activity is essential for the neurotoxic effects. May act by binding in a calcium-dependent fashion to neurotonal pentraxin-1 (NPTX1) and neurotonal pentraxin-2 (NPTX2), but not to neuronal pentraxin receptor (NPTXR). Also binds to taipoxin-associated calcium binding protein 49 (RCN2), a protein localized in the lumen of endoplasmic reticulum. In terms of biological role, monomer (alpha chain): Snake venom phospholipase A2 (PLA2) that possesses a low level of presynaptic activity and the same high enzymatic activity than the heterotrimer. PLA2 catalyzes the calcium-dependent hydrolysis of the 2-acyl groups in 3-sn-phosphoglycerides. This Oxyuranus scutellatus canni (Papuan taipan) protein is Basic phospholipase A2 cannitoxin alpha chain.